We begin with the raw amino-acid sequence, 282 residues long: 4-diphosphocytidyl-2-C-methyl-D-erythritol kinase (282 aa).

Residue K12 is part of the active site. 95-105 contacts ATP; that stretch reads PMGGGIGGGSS. D137 is a catalytic residue.

The protein belongs to the GHMP kinase family. IspE subfamily.

It catalyses the reaction 4-CDP-2-C-methyl-D-erythritol + ATP = 4-CDP-2-C-methyl-D-erythritol 2-phosphate + ADP + H(+). It functions in the pathway isoprenoid biosynthesis; isopentenyl diphosphate biosynthesis via DXP pathway; isopentenyl diphosphate from 1-deoxy-D-xylulose 5-phosphate: step 3/6. In terms of biological role, catalyzes the phosphorylation of the position 2 hydroxy group of 4-diphosphocytidyl-2C-methyl-D-erythritol. This Pseudomonas paraeruginosa (strain DSM 24068 / PA7) (Pseudomonas aeruginosa (strain PA7)) protein is 4-diphosphocytidyl-2-C-methyl-D-erythritol kinase.